The chain runs to 214 residues: Zinc finger protein 11 (214 aa).

The tract at residues 1–27 is disordered; sequence MKRTHLASFSNRDKTQEEEGEDGNGDN. Residues 49–71 form a C2H2-type zinc finger; sequence YTCSFCRREFRSAQALGGHMNVH. The short motif at 72–79 is the Nuclear localization signal element; sequence RRDRAKLR. Residues 89 to 130 are disordered; it reads HHHTPIANPNPNFSSSSSSSTTTAHLEPSLTNQRSKTTPFPS. Residues 102 to 111 are compositionally biased toward low complexity; it reads SSSSSSSTTT. Polar residues predominate over residues 117 to 128; that stretch reads SLTNQRSKTTPF.

As to expression, expressed in roots, stems, axillary buds and flowers.

The protein resides in the nucleus. Functionally, probable transcription factor that may regulate cell division and growth. The protein is Zinc finger protein 11 of Arabidopsis thaliana (Mouse-ear cress).